Consider the following 21-residue polypeptide: Short neurotoxin E1 (21 aa).

The tract at residues 1 to 21 (MICYNHQSSEPPTTXTCSEGQ) is disordered.

In terms of processing, contains 4 disulfide bonds. Expressed by the venom gland.

It localises to the secreted. In terms of biological role, binds to muscle nicotinic acetylcholine receptor (nAChR) and inhibit acetylcholine from binding to the receptor, thereby impairing neuromuscular transmission. The protein is Short neurotoxin E1 of Micrurus pyrrhocryptus (Coral snake).